Reading from the N-terminus, the 92-residue chain is Small ribosomal subunit protein bS20 (92 aa).

The segment covering 1–21 has biased composition (basic and acidic residues); it reads MPLHKSAEKRLRQAARRNERN. Disordered stretches follow at residues 1 to 26 and 73 to 92; these read MPLHKSAEKRLRQAARRNERNRARKK and ASRKKAQLTKALNNYTPTAS. The segment covering 82–92 has biased composition (polar residues); it reads KALNNYTPTAS.

It belongs to the bacterial ribosomal protein bS20 family.

In terms of biological role, binds directly to 16S ribosomal RNA. This chain is Small ribosomal subunit protein bS20, found in Chlorobaculum tepidum (strain ATCC 49652 / DSM 12025 / NBRC 103806 / TLS) (Chlorobium tepidum).